The sequence spans 275 residues: Diaminopimelate epimerase (275 aa).

3 residues coordinate substrate: Asn-13, Gln-46, and Asn-65. Cys-74 acts as the Proton donor in catalysis. Substrate-binding positions include 75–76 (GN), Asn-158, Asn-191, and 209–210 (ER). Residue Cys-218 is the Proton acceptor of the active site. A substrate-binding site is contributed by 219-220 (GT).

Belongs to the diaminopimelate epimerase family. In terms of assembly, homodimer.

The protein localises to the cytoplasm. The enzyme catalyses (2S,6S)-2,6-diaminopimelate = meso-2,6-diaminopimelate. It functions in the pathway amino-acid biosynthesis; L-lysine biosynthesis via DAP pathway; DL-2,6-diaminopimelate from LL-2,6-diaminopimelate: step 1/1. In terms of biological role, catalyzes the stereoinversion of LL-2,6-diaminopimelate (L,L-DAP) to meso-diaminopimelate (meso-DAP), a precursor of L-lysine and an essential component of the bacterial peptidoglycan. The protein is Diaminopimelate epimerase of Nitrosomonas europaea (strain ATCC 19718 / CIP 103999 / KCTC 2705 / NBRC 14298).